The chain runs to 458 residues: MAVSASVAAGDEDWVLPSEVEVLESIYLDELQVVKGNGRSSPWEIYITLHPATAEDQDSQYVCFTLVLQVPTQYPHEVPQISIRNPRGLSDEQIHKISQALSHVAEAGLGTAMLYELIEKGKEILTDNNIPHGQCVICLYGFQEKEAFTKTPCYHYFRCHCLARYIQHMEHELQAQGREREQERQHAAPEQAVGVQCPVCREPLVYDLASLKAAPEPQQPMELYQPDAESLRQQEERKRLYQRQQERGGIIDLEAERNRYFISLQQPPAPLEPESAIDVSRGSHQPSTLATKPSTTSATHTALSVSLPLASQYTCEKTPGAGPHLPKLGETQKAVLDPRRASRGPWRQPERRHLKGGECNTLKGTSDTQKLQSPEGPLKESMDLKPESHNQGGKGPPQDKGPGEWQGPPPRRTRDCAHWERAKNRTPASSYPRLPRGRGAYRPGPRREPVSLESEDGS.

Residues 18-128 (SEVEVLESIY…EKGKEILTDN (111 aa)) form the RWD domain. Zn(2+) is bound by residues C135, C138, C153, H155, C161, C197, and C200. The RING-type zinc finger occupies 135 to 201 (CVICLYGFQE…AVGVQCPVCR (67 aa)). Disordered stretches follow at residues 267 to 299 (PPAP…TSAT) and 317 to 458 (KTPG…EDGS). Polar residues-rich tracts occupy residues 282 to 299 (GSHQ…TSAT) and 362 to 372 (LKGTSDTQKLQ). 2 stretches are compositionally biased toward basic and acidic residues: residues 377-388 (PLKESMDLKPES) and 412-423 (RTRDCAHWERAK). The segment covering 432 to 443 (PRLPRGRGAYRP) has biased composition (low complexity).

It belongs to the RNF25 family. In terms of assembly, interacts with UBE2D2, and may also interact with UBE2E1 and UBE2E3. Interacts with RELA/p65. In terms of processing, ubiquitinated; autoubiquitinated.

The protein resides in the cytoplasm. It catalyses the reaction S-ubiquitinyl-[E2 ubiquitin-conjugating enzyme]-L-cysteine + [acceptor protein]-L-lysine = [E2 ubiquitin-conjugating enzyme]-L-cysteine + N(6)-ubiquitinyl-[acceptor protein]-L-lysine.. It functions in the pathway protein modification; protein ubiquitination. Functionally, E3 ubiquitin-protein ligase that plays a key role in the RNF14-RNF25 translation quality control pathway, a pathway that takes place when a ribosome has stalled during translation, and which promotes ubiquitination and degradation of translation factors on stalled ribosomes. Catalyzes ubiquitination of RPS27A in response to ribosome collisions, promoting activation of RNF14. RNF25 catalyzes ubiquitination of other ribosomal proteins on stalled ribosomes, such as RPL0, RPL1, RPL12, RPS13 and RPS17. Also involved in ubiquitination and degradation of stalled ETF1/eRF1. Independently of its function in the response to stalled ribosomes, mediates ubiquitination and subsequent proteasomal degradation of NKD2. May also stimulate transcription mediated by NF-kappa-B via its interaction with RELA/p65. This is E3 ubiquitin-protein ligase RNF25 (RNF25) from Bos taurus (Bovine).